The sequence spans 257 residues: Nickel import system ATP-binding protein NikD (257 aa).

Residues 4 to 245 enclose the ABC transporter domain; that stretch reads IDIQNLTIKN…HLHPYTERLI (242 aa). ATP is bound at residue 37–44; it reads GESGAGKS.

It belongs to the ABC transporter superfamily. In terms of assembly, the complex is composed of two ATP-binding proteins (NikD and NikE), two transmembrane proteins (NikB and NikC) and a solute-binding protein (NikA).

Its subcellular location is the cell membrane. The enzyme catalyses Ni(2+)(out) + ATP + H2O = Ni(2+)(in) + ADP + phosphate + H(+). Its function is as follows. Part of the ABC transporter complex NikABCDE (Opp2) involved in nickel import. Probably responsible for energy coupling to the transport system. This chain is Nickel import system ATP-binding protein NikD, found in Staphylococcus aureus (strain Mu50 / ATCC 700699).